The sequence spans 243 residues: Small ribosomal subunit protein uS3 (243 aa).

Positions 39 to 107 (MRKFVMSELK…ETHLNIVEVR (69 aa)) constitute a KH type-2 domain. The disordered stretch occupies residues 214-243 (ASERRAMEGDAQGPASRDRDRDRDRRRDNA). The span at 229–243 (SRDRDRDRDRRRDNA) shows a compositional bias: basic and acidic residues.

The protein belongs to the universal ribosomal protein uS3 family. As to quaternary structure, part of the 30S ribosomal subunit. Forms a tight complex with proteins S10 and S14.

Its function is as follows. Binds the lower part of the 30S subunit head. Binds mRNA in the 70S ribosome, positioning it for translation. The chain is Small ribosomal subunit protein uS3 from Rhizobium leguminosarum bv. trifolii (strain WSM2304).